A 312-amino-acid chain; its full sequence is Lipoyl synthase (312 aa).

Residues cysteine 51, cysteine 56, cysteine 62, cysteine 77, cysteine 81, cysteine 84, and serine 290 each coordinate [4Fe-4S] cluster. Positions 63 to 280 constitute a Radical SAM core domain; it reads WSRKTATYLA…RTIGTSLGLF (218 aa).

This sequence belongs to the radical SAM superfamily. Lipoyl synthase family. The cofactor is [4Fe-4S] cluster.

It is found in the cytoplasm. The catalysed reaction is [[Fe-S] cluster scaffold protein carrying a second [4Fe-4S](2+) cluster] + N(6)-octanoyl-L-lysyl-[protein] + 2 oxidized [2Fe-2S]-[ferredoxin] + 2 S-adenosyl-L-methionine + 4 H(+) = [[Fe-S] cluster scaffold protein] + N(6)-[(R)-dihydrolipoyl]-L-lysyl-[protein] + 4 Fe(3+) + 2 hydrogen sulfide + 2 5'-deoxyadenosine + 2 L-methionine + 2 reduced [2Fe-2S]-[ferredoxin]. It participates in protein modification; protein lipoylation via endogenous pathway; protein N(6)-(lipoyl)lysine from octanoyl-[acyl-carrier-protein]: step 2/2. Catalyzes the radical-mediated insertion of two sulfur atoms into the C-6 and C-8 positions of the octanoyl moiety bound to the lipoyl domains of lipoate-dependent enzymes, thereby converting the octanoylated domains into lipoylated derivatives. The chain is Lipoyl synthase from Chlamydia caviae (strain ATCC VR-813 / DSM 19441 / 03DC25 / GPIC) (Chlamydophila caviae).